The sequence spans 259 residues: Ras-related protein Rab-34 (259 aa).

An N-acetylmethionine modification is found at methionine 1. 8 residues coordinate GTP: serine 62, valine 63, glycine 64, lysine 65, threonine 66, aspartate 78, tyrosine 81, and threonine 84. Threonine 66 is a binding site for Mg(2+). Residues 71–89 carry the Switch 1 motif; it reads RFCKDTFDKNYKATIGVDF. Residues threonine 84 and aspartate 107 each coordinate Mg(2+). Residues 108-127 carry the Switch 2 motif; the sequence is TAGQERFKCIASTYYRGAQA. GTP is bound by residues glycine 110, lysine 167, aspartate 169, and serine 198. 2 positions are modified to phosphoserine: serine 241 and serine 244. Residues cysteine 257 and cysteine 258 are each lipidated (S-geranylgeranyl cysteine).

This sequence belongs to the small GTPase superfamily. Rab family. Interacts with RILP. The GTP-bound form interacts with REP15. Mg(2+) serves as cofactor.

The protein localises to the cytoplasm. The protein resides in the golgi apparatus. Its subcellular location is the cytoplasmic vesicle. It localises to the phagosome. It is found in the phagosome membrane. The protein localises to the cell projection. The protein resides in the cilium. Its subcellular location is the cytoskeleton. It localises to the microtubule organizing center. It is found in the centrosome. The protein localises to the centriole. The catalysed reaction is GTP + H2O = GDP + phosphate + H(+). Its activity is regulated as follows. Regulated by guanine nucleotide exchange factors (GEFs) which promote the exchange of bound GDP for free GTP. Regulated by GTPase activating proteins (GAPs) which increase the GTP hydrolysis activity. Inhibited by GDP dissociation inhibitors (GDIs). Its function is as follows. The small GTPases Rab are key regulators of intracellular membrane trafficking, from the formation of transport vesicles to their fusion with membranes. Rabs cycle between an inactive GDP-bound form and an active GTP-bound form that is able to recruit to membranes different sets of downstream effectors directly responsible for vesicle formation, movement, tethering and fusion. RAB34 transports protein involved in the redistribution of lysosomes to the peri-Golgi region. Plays a role in the maturation of phagosomes that engulf pathogens, such as S.aureus and M.tuberculosis. Plays a role in the fusion of phagosomes with lysosomes. Required for the early steps of intracellular ciliogenesis, the cilium assembly pathway initiated by trafficking and docking of ciliary vesicles to the centrioles in the cytoplasm, followed by axoneme formation in the cytoplasm. After axoneme elongation, the centrioles migrate close to the cell surface so that ciliary vesicles can fuse with the plasma membrane to expose cilia to the extracellular space. It seems dispensable for ciliogenesis via the extracellular pathway where cilium assembly begins after migration and docking of the centriole to the plasma membrane. Also acts as a positive regulator of hedgehog signaling and regulates ciliary function. This Sus scrofa (Pig) protein is Ras-related protein Rab-34 (RAB34).